Here is a 66-residue protein sequence, read N- to C-terminus: Beta-toxin Chui3 (66 aa).

Residues 1–66 (KEGYLVELGT…VWPLKNKTCR (66 aa)) form the LCN-type CS-alpha/beta domain. 4 cysteine pairs are disulfide-bonded: C12–C65, C16–C41, C25–C46, and C29–C48.

It belongs to the long (4 C-C) scorpion toxin superfamily. Sodium channel inhibitor family. Beta subfamily. In terms of tissue distribution, expressed by the venom gland.

Its subcellular location is the secreted. Its function is as follows. Beta toxins bind voltage-independently at site-4 of sodium channels (Nav) and shift the voltage of activation toward more negative potentials thereby affecting sodium channel activation and promoting spontaneous and repetitive firing. Acts on human sodium channel Nav1.6/SCN8A. This Centruroides huichol (Scorpion) protein is Beta-toxin Chui3.